The sequence spans 1264 residues: Multifunctional 2-oxoglutarate metabolism enzyme (1264 aa).

The segment at 1–41 is 2-oxoglutarate dehydrogenase E1, N-terminal part; that stretch reads MSSSPSPFGQNEWLVEEMYRKFREDPSSVDPSWHEFLVDYN. The segment covering 23–37 has biased composition (basic and acidic residues); it reads REDPSSVDPSWHEFL. The interval 23-140 is disordered; the sequence is REDPSSVDPS…AQPADDSDQN (118 aa). Residues 42 to 102 form a linker region; sequence PEPTTDSSAS…SKPQAKAKPA (61 aa). Over residues 43–59 the composition is skewed to polar residues; that stretch reads EPTTDSSASENGQQTRT. Pro residues predominate over residues 63-73; it reads KAPPEPAPAPA. The segment at 103–373 is succinyltransferase E2; the sequence is ESKSSTKPAD…LRTVHQLLLS (271 aa). The active-site Proton acceptor; for succinyltransferase activity is the histidine 352. The segment at 374 to 1264 is 2-oxoglutarate dehydrogenase E1, C-terminal part; the sequence is DDFFDEIFRE…QEILDEAFAP (891 aa). Arginine 578 is a binding site for thiamine diphosphate. Positions 617 and 642 each coordinate 2-oxoglutarate. Thiamine diphosphate is bound by residues serine 642, leucine 644, aspartate 681, alanine 682, alanine 683, and asparagine 714. Aspartate 681 is a Mg(2+) binding site. Positions 714 and 716 each coordinate Mg(2+). Residues 819–850 adopt a coiled-coil conformation; that stretch reads DISMKEAEDALRDYQGQLEQVFNEVRELEKHE. Histidine 1056 contributes to the 2-oxoglutarate binding site. Residues threonine 1074, arginine 1090, lysine 1125, serine 1128, glutamine 1178, arginine 1185, and arginine 1186 each contribute to the acetyl-CoA site.

It belongs to the 2-oxoacid dehydrogenase family. Kgd subfamily. In terms of assembly, homodimer. The 2-oxoglutarate dehydrogenase (ODH) complex contains multiple copies of three enzymatic components: 2-oxoglutarate dehydrogenase (E1), dihydrolipoamide succinyltransferase (E2) and lipoamide dehydrogenase (E3). Requires Mg(2+) as cofactor. Thiamine diphosphate serves as cofactor.

It catalyses the reaction glyoxylate + 2-oxoglutarate + H(+) = 2-hydroxy-3-oxoadipate + CO2. The catalysed reaction is 2-oxoglutarate + H(+) = succinate semialdehyde + CO2. The enzyme catalyses N(6)-[(R)-lipoyl]-L-lysyl-[protein] + 2-oxoglutarate + H(+) = N(6)-[(R)-S(8)-succinyldihydrolipoyl]-L-lysyl-[protein] + CO2. It carries out the reaction N(6)-[(R)-dihydrolipoyl]-L-lysyl-[protein] + succinyl-CoA = N(6)-[(R)-S(8)-succinyldihydrolipoyl]-L-lysyl-[protein] + CoA. The protein operates within carbohydrate metabolism; tricarboxylic acid cycle; succinate from 2-oxoglutarate (transferase route): step 1/2. It participates in carbohydrate metabolism; tricarboxylic acid cycle; succinyl-CoA from 2-oxoglutarate (dehydrogenase route): step 1/1. With respect to regulation, alpha-ketoglutarate dehydrogenase and decarboxylase activities are inhibited by unphosphorylated GarA, and allosterically activated by acetyl-CoA, the main substrate of the TCA cycle. Shows three enzymatic activities that share a first common step, the attack of thiamine-PP on 2-oxoglutarate (alpha-ketoglutarate, KG), leading to the formation of an enamine-thiamine-PP intermediate upon decarboxylation. Thus, displays KGD activity, catalyzing the decarboxylation from five-carbon 2-oxoglutarate to four-carbon succinate semialdehyde (SSA). Also catalyzes C-C bond formation between the activated aldehyde formed after decarboxylation of alpha-ketoglutarate and the carbonyl of glyoxylate (GLX), to yield 2-hydroxy-3-oxoadipate (HOA), which spontaneously decarboxylates to form 5-hydroxylevulinate (HLA). And is also a component of the 2-oxoglutarate dehydrogenase (ODH) complex, that catalyzes the overall conversion of 2-oxoglutarate to succinyl-CoA and CO(2). The KG decarboxylase and KG dehydrogenase reactions provide two alternative, tightly regulated, pathways connecting the oxidative and reductive branches of the TCA cycle. The chain is Multifunctional 2-oxoglutarate metabolism enzyme (kgd) from Mycobacterium sp. (strain JLS).